Consider the following 250-residue polypeptide: MSGHSKWATTKHKKAVIDAKRGKAFAKLIKNIEVAARTGGGDPAGNPTLYDAIQKAKKTSVPNDNIERARKRGAGEEAGGADWQTIMYEGYGPNGVAVLIECLTDNRNRAAGEVRTAMTRNGGNMADPGSVSYLFTRKGVVTLEKGDQSEDDVLMAVLDAGAEEVTDLGDTFEIVSEPTDLVAVRSALQEAGIDYDSAEADFRASVEVPVDADGARKVFKLVDALEESDDVQNVYTNVDLSDEVLAELDD.

The protein belongs to the TACO1 family.

Its subcellular location is the cytoplasm. The protein is Probable transcriptional regulatory protein RHA1_ro06891 of Rhodococcus jostii (strain RHA1).